The primary structure comprises 214 residues: Adenylate kinase (214 aa).

Position 10 to 15 (10 to 15 (GAGKGT)) interacts with ATP. Positions 30-59 (STGDMFRDHKARGTELGKTVQAIMDAGGLV) are NMP. AMP contacts are provided by residues threonine 31, arginine 36, 57–59 (GLV), 85–88 (GYPR), and glutamine 92. Residues 126–163 (GRRSCPKCGAVYHVSANPPRRMGYCDRDDAGLVQRDDD) are LID. Residue arginine 127 coordinates ATP. Zn(2+)-binding residues include cysteine 130 and cysteine 133. 136 to 137 (VY) is a binding site for ATP. Zn(2+)-binding residues include cysteine 150 and aspartate 153. 2 residues coordinate AMP: arginine 160 and arginine 171. Glycine 199 lines the ATP pocket.

This sequence belongs to the adenylate kinase family. As to quaternary structure, monomer.

The protein resides in the cytoplasm. It catalyses the reaction AMP + ATP = 2 ADP. The protein operates within purine metabolism; AMP biosynthesis via salvage pathway; AMP from ADP: step 1/1. In terms of biological role, catalyzes the reversible transfer of the terminal phosphate group between ATP and AMP. Plays an important role in cellular energy homeostasis and in adenine nucleotide metabolism. This is Adenylate kinase from Anaeromyxobacter sp. (strain Fw109-5).